The chain runs to 72 residues: MAKEEVLEFPGVVTELLPNAMFRVKLENEHEIIAHTAGRMRKNRIRVLAGDKVLVEMTPYDLTKGRITYRFK.

The region spanning 1 to 72 (MAKEEVLEFP…TKGRITYRFK (72 aa)) is the S1-like domain.

This sequence belongs to the IF-1 family. In terms of assembly, component of the 30S ribosomal translation pre-initiation complex which assembles on the 30S ribosome in the order IF-2 and IF-3, IF-1 and N-formylmethionyl-tRNA(fMet); mRNA recruitment can occur at any time during PIC assembly.

The protein localises to the cytoplasm. Its function is as follows. One of the essential components for the initiation of protein synthesis. Stabilizes the binding of IF-2 and IF-3 on the 30S subunit to which N-formylmethionyl-tRNA(fMet) subsequently binds. Helps modulate mRNA selection, yielding the 30S pre-initiation complex (PIC). Upon addition of the 50S ribosomal subunit IF-1, IF-2 and IF-3 are released leaving the mature 70S translation initiation complex. This chain is Translation initiation factor IF-1, found in Brucella abortus (strain 2308).